Here is a 449-residue protein sequence, read N- to C-terminus: Probable D-serine dehydratase (449 aa).

The residue at position 119 (Lys-119) is an N6-(pyridoxal phosphate)lysine.

It belongs to the serine/threonine dehydratase family. DsdA subfamily. Requires pyridoxal 5'-phosphate as cofactor.

It carries out the reaction D-serine = pyruvate + NH4(+). The sequence is that of Probable D-serine dehydratase from Pseudomonas putida (strain ATCC 700007 / DSM 6899 / JCM 31910 / BCRC 17059 / LMG 24140 / F1).